Consider the following 545-residue polypeptide: CTP synthase (545 aa).

The segment at 1-265 (MNGIKHIFIT…DKFVIKHLDL (265 aa)) is amidoligase domain. Residue Ser15 participates in CTP binding. Ser15 provides a ligand contact to UTP. ATP contacts are provided by residues 16–21 (SIGKGL) and Asp73. Mg(2+) is bound by residues Asp73 and Glu141. Residues 148–150 (DIE), 188–193 (KTKPTQ), and Lys224 each bind CTP. Residues 188–193 (KTKPTQ) and Lys224 each bind UTP. Positions 290–534 (EIAIIGKYTG…VAAALARKEI (245 aa)) constitute a Glutamine amidotransferase type-1 domain. Residue Gly349 participates in L-glutamine binding. Cys376 serves as the catalytic Nucleophile; for glutamine hydrolysis. Residues 377 to 380 (LGMQ), Glu400, and Arg460 each bind L-glutamine. Catalysis depends on residues His507 and Glu509.

This sequence belongs to the CTP synthase family. Homotetramer.

It carries out the reaction UTP + L-glutamine + ATP + H2O = CTP + L-glutamate + ADP + phosphate + 2 H(+). The catalysed reaction is L-glutamine + H2O = L-glutamate + NH4(+). The enzyme catalyses UTP + NH4(+) + ATP = CTP + ADP + phosphate + 2 H(+). Its pathway is pyrimidine metabolism; CTP biosynthesis via de novo pathway; CTP from UDP: step 2/2. With respect to regulation, allosterically activated by GTP, when glutamine is the substrate; GTP has no effect on the reaction when ammonia is the substrate. The allosteric effector GTP functions by stabilizing the protein conformation that binds the tetrahedral intermediate(s) formed during glutamine hydrolysis. Inhibited by the product CTP, via allosteric rather than competitive inhibition. Its function is as follows. Catalyzes the ATP-dependent amination of UTP to CTP with either L-glutamine or ammonia as the source of nitrogen. Regulates intracellular CTP levels through interactions with the four ribonucleotide triphosphates. The polypeptide is CTP synthase (Tropheryma whipplei (strain Twist) (Whipple's bacillus)).